Consider the following 245-residue polypeptide: 8-amino-3,8-dideoxy-manno-octulosonate cytidylyltransferase (245 aa).

The protein belongs to the KdsB family.

The protein localises to the cytoplasm. It catalyses the reaction 8-amino-3,8-dideoxy-alpha-D-manno-octulosonate + CTP = CMP-8-amino-3,8-dideoxy-alpha-D-manno-oct-2-ulosonate + diphosphate. The protein operates within bacterial outer membrane biogenesis; lipopolysaccharide biosynthesis. In terms of biological role, activates KDO8N (a required 8-carbon sugar) for incorporation into bacterial lipopolysaccharide in the Shewanella genus. The polypeptide is 8-amino-3,8-dideoxy-manno-octulosonate cytidylyltransferase (Shewanella amazonensis (strain ATCC BAA-1098 / SB2B)).